Here is a 167-residue protein sequence, read N- to C-terminus: MSEEKPQQSAEEPEPGEPKAKPAPEEPEPGEPKAKPAPEEPEPGEPKAKPAPEKTSDYYRISEKLPVRFNNPGWFHGYGTKEAVSMYRTSNQTYGSRAPTVHEMPKVFYPSSNKFSRQHAAFGMFQSHNINVTLEKSLVTGPDNHITHYDRLNFHPSYNVNRPSICD.

Residues 1 to 54 (MSEEKPQQSAEEPEPGEPKAKPAPEEPEPGEPKAKPAPEEPEPGEPKAKPAPEK) are disordered. Residues 16–54 (GEPKAKPAPEEPEPGEPKAKPAPEEPEPGEPKAKPAPEK) are compositionally biased toward basic and acidic residues.

It belongs to the PIERCE1 family. In terms of assembly, microtubule inner protein component of sperm flagellar doublet microtubules. Interacts with CFAP53, ODAD1 and ODAD3; the interactions link the outer dynein arms docking complex (ODA-DC) to the internal microtubule inner proteins (MIP) in cilium axoneme. In terms of tissue distribution, expressed in brain, lung, kidney and testis.

The protein resides in the cytoplasm. Its subcellular location is the cytoskeleton. It is found in the cilium axoneme. The protein localises to the flagellum axoneme. Its function is as follows. Microtubule inner protein involved in the attachment of outer dynein arms (ODAs) to dynein-decorated doublet microtubules (DMTs) in cilia axoneme. Functions at the initial step of left-right asymmetry specification of the visceral organs. The polypeptide is Piercer of microtubule wall 1 protein (Mus musculus (Mouse)).